Here is a 150-residue protein sequence, read N- to C-terminus: Prolamin PPROL 14E (150 aa).

Positions 1 to 19 (MKIIFVFALLAIAACSASA) are cleaved as a signal peptide. The residue at position 20 (Q20) is a Pyrrolidone carboxylic acid.

This sequence belongs to the prolamin family.

It localises to the vacuole. The protein localises to the aleurone grain. Its function is as follows. Seed storage protein; serves as a source of nitrogen, carbon and sulfur for the young developing seedling. This is Prolamin PPROL 14E from Oryza sativa subsp. indica (Rice).